The primary structure comprises 153 residues: MNVGTAHSEVNPNTRVMNSRGIWLSYVLAIGLLHVVLLSIPFVSVPVVWTLTNLIHNTGMYIFLHTVKGTPFETPDQGKARLLTHWEQMDYGVQFTASRKFLTITPIVLYFLTSFYTKYDQIHFVLNTVSLMSVLIPKLPQLHGVRIFGINKY.

Residues 1–17 (MNVGTAHSEVNPNTRVM) form an important for ceramide level-sensing region. The Cytoplasmic portion of the chain corresponds to 1 to 21 (MNVGTAHSEVNPNTRVMNSRG). 2 consecutive transmembrane segments (helical) span residues 22–42 (IWLSYVLAIGLLHVVLLSIPF) and 43–63 (VSVPVVWTLTNLIHNTGMYIF). At 64–94 (LHTVKGTPFETPDQGKARLLTHWEQMDYGVQ) the chain is on the cytoplasmic side. The chain crosses the membrane as a helical span at residues 95–117 (FTASRKFLTITPIVLYFLTSFYT). The Extracellular segment spans residues 118–121 (KYDQ). The chain crosses the membrane as a helical span at residues 122 to 142 (IHFVLNTVSLMSVLIPKLPQL). Proline 137 carries the hydroxyproline modification. Residues 143 to 153 (HGVRIFGINKY) are Cytoplasmic-facing.

This sequence belongs to the ORM family. As to quaternary structure, ceramide-sensitive subunit of the serine palmitoyltransferase (SPT) complex, which is also composed of SPTLC1, SPTLC2/3 and SPTSSA/B. In terms of processing, when hydroxylated at Pro-137, ubiquitinated via 'Lys-48'-linkage, leading to proteasomal degradation. In endothelial cells, ORMDL3 proteasomal degradation is controlled by the sphingosine 1-phosphate receptor signaling pathway.

The protein resides in the endoplasmic reticulum membrane. In terms of biological role, plays an essential role in the homeostatic regulation of sphingolipid de novo biosynthesis by modulating the activity of the serine palmitoyltransferase (SPT) in response to ceramide levels. When complexed to SPT, the binding of ceramides to its N-terminus stabilizes a conformation that block SPT substrate entry, hence preventing SPT catalytic activity. Through this mechanism, maintains ceramide levels at sufficient concentrations for the production of complex sphingolipids, but which prevents the accumulation of ceramides to levels that trigger apoptosis. The polypeptide is ORM1-like protein 3 (ORMDL3) (Ailuropoda melanoleuca (Giant panda)).